Reading from the N-terminus, the 78-residue chain is Acyl carrier protein (78 aa).

Residues serine 2–lysine 77 form the Carrier domain. Serine 37 carries the O-(pantetheine 4'-phosphoryl)serine modification.

It belongs to the acyl carrier protein (ACP) family. 4'-phosphopantetheine is transferred from CoA to a specific serine of apo-ACP by AcpS. This modification is essential for activity because fatty acids are bound in thioester linkage to the sulfhydryl of the prosthetic group.

It is found in the cytoplasm. It participates in lipid metabolism; fatty acid biosynthesis. Functionally, carrier of the growing fatty acid chain in fatty acid biosynthesis. This is Acyl carrier protein from Wigglesworthia glossinidia brevipalpis.